A 950-amino-acid chain; its full sequence is Protocadherin alpha-8 (950 aa).

The first 29 residues, 1 to 29 (MVYHWRGDLGSWRLLLLLLLLAAWKVGSG), serve as a signal peptide directing secretion. Cadherin domains lie at 30–133 (QLHY…PPVF), 157–242 (ASDA…APNF), 243–350 (EQSE…VPEI), 351–455 (ALTS…APAF), 456–565 (AQPE…APAL), and 581–678 (VPRS…APKA). Residues 30–697 (QLHYSVPEEA…GPEAALVDVN (668 aa)) lie on the Extracellular side of the membrane. Residues N257 and N265 are each glycosylated (N-linked (GlcNAc...) asparagine). N548 carries N-linked (GlcNAc...) asparagine glycosylation. The helical transmembrane segment at 698-718 (VYLIIAICAVSSLLVLTLLLY) threads the bilayer. At 719–950 (TALRCSALPT…GNSTTDNSDQ (232 aa)) the chain is on the cytoplasmic side. PXXP repeat units follow at residues 774–777 (PCLP), 799–802 (PRQP), 832–835 (PGGP), 873–876 (PGNP), and 891–894 (PGSP). The segment at 774–894 (PCLPPDLGSV…PDKFIIPGSP (121 aa)) is 5 X 4 AA repeats of P-X-X-P. The tract at residues 831 to 950 (GPGGPDQQWP…GNSTTDNSDQ (120 aa)) is disordered. A compositionally biased stretch (basic and acidic residues) spans 909–923 (DKSDFITFGKKEETK).

The protein resides in the cell membrane. Functionally, potential calcium-dependent cell-adhesion protein. May be involved in the establishment and maintenance of specific neuronal connections in the brain. The protein is Protocadherin alpha-8 (PCDHA8) of Pan troglodytes (Chimpanzee).